A 474-amino-acid polypeptide reads, in one-letter code: MSDKVVTRFAPSPTGYLHIGGARTALFNWLYAKHTGGTMLLRIEDTDRERSTAAATAAILDGLSWLGLGWDGDAVSQFERAPRHREVAEELVRMGKAYYSYETPAELEAMREAARAKGLPPRYNGQWRDRTPSEAPAGVKGAIRIKAPTEGETIVHDRVQGEVRFPNKDLDDFIILRSDGNPTYMHAVVVDDHDMGVTHIIRGDDHLTNAARQTVIYNAMGWDVPSMSHIPLIHGADGAKLSKRHGALGVEAYRAMGYLPEALLNYLARLGWSHGDDEIMSIKDMISWFDIGDVNKGAARFDFAKLEAINGAHMRRMADAQLLDIFIATLPYLEGGPAMAARLNEHNKAQLLAALPGLKERAKTLVELVDGAAFLFATRPLPVDEKAALLLNDGARKILRGAHEALNALSGDWTAAAAEAAVRDYALAGGHKLGAVAQPLRAALTGKSTSPGVFDVLAVLGREESLARIADQID.

The 'HIGH' region signature appears at 11 to 21 (PSPTGYLHIGG). A 'KMSKS' region motif is present at residues 240–244 (KLSKR). ATP is bound at residue Lys243.

The protein belongs to the class-I aminoacyl-tRNA synthetase family. Glutamate--tRNA ligase type 1 subfamily. In terms of assembly, monomer.

Its subcellular location is the cytoplasm. The enzyme catalyses tRNA(Glu) + L-glutamate + ATP = L-glutamyl-tRNA(Glu) + AMP + diphosphate. Catalyzes the attachment of glutamate to tRNA(Glu) in a two-step reaction: glutamate is first activated by ATP to form Glu-AMP and then transferred to the acceptor end of tRNA(Glu). This is Glutamate--tRNA ligase 1 from Mesorhizobium japonicum (strain LMG 29417 / CECT 9101 / MAFF 303099) (Mesorhizobium loti (strain MAFF 303099)).